We begin with the raw amino-acid sequence, 151 residues long: Prefoldin subunit alpha (151 aa).

The protein belongs to the prefoldin subunit alpha family. As to quaternary structure, heterohexamer of two alpha and four beta subunits.

It is found in the cytoplasm. Its function is as follows. Molecular chaperone capable of stabilizing a range of proteins. Seems to fulfill an ATP-independent, HSP70-like function in archaeal de novo protein folding. This is Prefoldin subunit alpha (pfdA) from Aeropyrum pernix (strain ATCC 700893 / DSM 11879 / JCM 9820 / NBRC 100138 / K1).